The sequence spans 297 residues: MAVMTREDVEFRTMDGLTLRGWLYPSGMRGPALVMTQGFNASKEYLLADVAVWFQKRGVTSLLVDIRTTGLSDGEPRNDIDLDKQVEDCHDAVSFLSRHPSVDPEMIVYWGYSLGAVISLCAAALDKRAAAVIATAPNTDFIFDPVKRAATLSLAMRDRLSRLAGNPPLYLKIIGEDGQNPAGWYLGEERRSPEELDALFNSSNIMNQVTIQSYYRLLRWQPFGLMPSVSPTPVMIVTPSDDDLSKPENQRKLFDIFQEPKEFVLAENKGHMNCISGEDGEQFLQKQLEFMKRMLKF.

The abhydrolase domain stretch occupies residues 49-272 (DVAVWFQKRG…FVLAENKGHM (224 aa)).

This sequence belongs to the polyketide transferase af380 family.

Its pathway is mycotoxin biosynthesis. In terms of biological role, polyketide transferase; part of the core atranone cluster (CAC) which products are predicted to catalyze most or all steps of atranone synthesis, starting from geranylgeranyl pyrophosphate (GGPP). The initial cyclization of GGPP to dolabellane is probably performed by the terpene cyclase ATR13. The Baeyer-Villiger oxidation near the end of the atranone synthesis, which converts atranones D and E to atranones F and G is predicted to be catalyzed by the monooxygenase ATR8. Of the CAC's other predicted gene products, the reducing PKS ATR6 might synthesize a polyketide chain. This polyketide is probably transferred onto the atranone backbone by the polyketide transferase ATR5. Other predicted CAC products include 4 oxygenases (ATR2, ATR3, ATR4, and ATR14), 3 short-chain reductases (ATR7, ATR9, and ATR10), and a methyltransferase (ATR12). These may all be involved in the various steps of atranone biosynthesis, although their specific roles must await experimental determination. In Stachybotrys chlorohalonatus (strain IBT 40285), this protein is Polyketide transferase ATR5.